Here is a 126-residue protein sequence, read N- to C-terminus: S-adenosylmethionine decarboxylase proenzyme (126 aa).

The active-site Schiff-base intermediate with substrate; via pyruvic acid is serine 63. At serine 63 the chain carries Pyruvic acid (Ser); by autocatalysis. Histidine 68 serves as the catalytic Proton acceptor; for processing activity. Cysteine 83 acts as the Proton donor; for catalytic activity in catalysis.

Belongs to the prokaryotic AdoMetDC family. Type 1 subfamily. As to quaternary structure, heterotetramer of two alpha and two beta chains arranged as a dimer of alpha/beta heterodimers. It depends on pyruvate as a cofactor. In terms of processing, is synthesized initially as an inactive proenzyme. Formation of the active enzyme involves a self-maturation process in which the active site pyruvoyl group is generated from an internal serine residue via an autocatalytic post-translational modification. Two non-identical subunits are generated from the proenzyme in this reaction, and the pyruvate is formed at the N-terminus of the alpha chain, which is derived from the carboxyl end of the proenzyme. The post-translation cleavage follows an unusual pathway, termed non-hydrolytic serinolysis, in which the side chain hydroxyl group of the serine supplies its oxygen atom to form the C-terminus of the beta chain, while the remainder of the serine residue undergoes an oxidative deamination to produce ammonia and the pyruvoyl group blocking the N-terminus of the alpha chain.

The catalysed reaction is S-adenosyl-L-methionine + H(+) = S-adenosyl 3-(methylsulfanyl)propylamine + CO2. It functions in the pathway amine and polyamine biosynthesis; S-adenosylmethioninamine biosynthesis; S-adenosylmethioninamine from S-adenosyl-L-methionine: step 1/1. In terms of biological role, catalyzes the decarboxylation of S-adenosylmethionine to S-adenosylmethioninamine (dcAdoMet), the propylamine donor required for the synthesis of the polyamines spermine and spermidine from the diamine putrescine. This is S-adenosylmethionine decarboxylase proenzyme from Pelotomaculum thermopropionicum (strain DSM 13744 / JCM 10971 / SI).